The sequence spans 195 residues: Phosphoheptose isomerase (195 aa).

The region spanning 35 to 195 (IVSKILQAGN…IVEYNLFKME (161 aa)) is the SIS domain. Substrate is bound at residue 51–53 (NGG). 2 residues coordinate Zn(2+): histidine 60 and glutamate 64. Substrate contacts are provided by residues glutamate 64, 95–96 (ND), 121–123 (STS), serine 126, and glutamine 173. Glutamine 173 and histidine 181 together coordinate Zn(2+).

It belongs to the SIS family. GmhA subfamily. Zn(2+) is required as a cofactor.

The protein localises to the cytoplasm. It carries out the reaction 2 D-sedoheptulose 7-phosphate = D-glycero-alpha-D-manno-heptose 7-phosphate + D-glycero-beta-D-manno-heptose 7-phosphate. Its pathway is carbohydrate biosynthesis; D-glycero-D-manno-heptose 7-phosphate biosynthesis; D-glycero-alpha-D-manno-heptose 7-phosphate and D-glycero-beta-D-manno-heptose 7-phosphate from sedoheptulose 7-phosphate: step 1/1. Catalyzes the isomerization of sedoheptulose 7-phosphate in D-glycero-D-manno-heptose 7-phosphate. The sequence is that of Phosphoheptose isomerase from Leptospira interrogans serogroup Icterohaemorrhagiae serovar copenhageni (strain Fiocruz L1-130).